Consider the following 21-residue polypeptide: Protein YnfR (21 aa).

This chain is Protein YnfR, found in Escherichia coli (strain K12).